The sequence spans 251 residues: Segregation and condensation protein A (251 aa).

Belongs to the ScpA family. As to quaternary structure, component of a cohesin-like complex composed of ScpA, ScpB and the Smc homodimer, in which ScpA and ScpB bind to the head domain of Smc. The presence of the three proteins is required for the association of the complex with DNA.

The protein resides in the cytoplasm. Participates in chromosomal partition during cell division. May act via the formation of a condensin-like complex containing Smc and ScpB that pull DNA away from mid-cell into both cell halves. This is Segregation and condensation protein A from Clostridium botulinum (strain Eklund 17B / Type B).